Here is a 525-residue protein sequence, read N- to C-terminus: M-phase inducer phosphatase 1 (525 aa).

A disordered region spans residues 1-42; the sequence is MELGPEPPHRRRLLFTCSPTPAPQPTGKVQFGASRAGGLSPV. The Phosphodegron motif lies at 74-84; the sequence is MGSSESTDSGF. At S76 the chain carries Phosphoserine; by CHEK1. Phosphoserine; by NEK11 is present on residues S79, S82, and S88. S124 is subject to Phosphoserine; by CHEK1 and CHEK2. Residues 141–143 carry the KEN box motif; sequence KEN. S178 carries the post-translational modification Phosphoserine; by CHEK1. The tract at residues 260–318 is disordered; sequence FDSPSPCSSTSSCSTRAVKRADRSHEESPRGTKRRKSSEASPVKADVPEPTQLPHQSLS. A compositionally biased stretch (low complexity) spans 262-274; that stretch reads SPSPCSSTSSCST. The span at 278–289 shows a compositional bias: basic and acidic residues; sequence KRADRSHEESPR. Phosphoserine; by CHEK1 and CHEK2 occurs at positions 283 and 296. One can recognise a Rhodanese domain in the interval 377–483; the sequence is LIKEFVIIDC…FFLKCQSHCE (107 aa). C432 is a catalytic residue. At T508 the chain carries Phosphothreonine; by CHEK1. Phosphoserine; by PLK3 occurs at positions 514 and 520.

It belongs to the MPI phosphatase family. As to quaternary structure, interacts with CCNB1/cyclin B1. Interacts with YWHAE/14-3-3 epsilon when phosphorylated. Interacts with CUL1 specifically when CUL1 is neddylated and active. Interacts with BTRC/BTRCP1 and FBXW11/BTRCP2. Interactions with CUL1, BTRC and FBXW11 are enhanced upon DNA damage. Interacts with CHEK2; mediates CDC25A phosphorylation and degradation in response to infrared-induced DNA damages. Interacts with HSP90AB1; prevents heat shock-mediated CDC25A degradation and contributes to cell cycle progression. Phosphorylated by CHEK1 on Ser-76, Ser-124, Ser-178, Ser-283, Ser-296 and Thr-508 during checkpoint mediated cell cycle arrest. Also phosphorylated by CHEK2 on Ser-124, Ser-283, and Ser-296 during checkpoint mediated cell cycle arrest. Phosphorylation on Ser-178 and Thr-508 creates binding sites for YWHAE/14-3-3 epsilon which inhibits CDC25A. Phosphorylation on Ser-76, Ser-124, Ser-178, Ser-283 and Ser-296 may also promote ubiquitin-dependent proteolysis of CDC25A by the SCF complex. Phosphorylation of CDC25A at Ser-76 by CHEK1 primes it for subsequent phosphorylation at Ser-79, Ser-82 and Ser-88 by NEK11. Phosphorylation by NEK11 is required for BTRC-mediated polyubiquitination and degradation. Phosphorylation by PIM1 leads to an increase in phosphatase activity. Phosphorylated by PLK3 following DNA damage, leading to promote its ubiquitination and degradation. In terms of processing, ubiquitinated by the anaphase promoting complex/cyclosome (APC/C) ubiquitin ligase complex that contains FZR1/CDH1 during G1 phase leading to its degradation by the proteasome. Ubiquitinated by a SCF complex containing BTRC and FBXW11 during S phase leading to its degradation by the proteasome. Deubiquitination by USP17L2/DUB3 leads to its stabilization.

The catalysed reaction is O-phospho-L-tyrosyl-[protein] + H2O = L-tyrosyl-[protein] + phosphate. Stimulated by B-type cyclins. Stimulated by PIM1-mediated phosphorylation. Its function is as follows. Tyrosine protein phosphatase which functions as a dosage-dependent inducer of mitotic progression. Directly dephosphorylates CDK1 and stimulates its kinase activity. Also dephosphorylates CDK2 in complex with cyclin-E, in vitro. This Rattus norvegicus (Rat) protein is M-phase inducer phosphatase 1 (Cdc25a).